The primary structure comprises 407 residues: POC1 centriolar protein homolog A (407 aa).

WD repeat units follow at residues 17 to 56 (GHRD…RAYR), 59 to 98 (GHKD…ESTV), 101 to 140 (AHTA…FLFS), 143 to 182 (QHIN…CVHS), 185 to 224 (EHGG…LLQH), 227 to 266 (LHSA…LLYT), and 269 to 308 (GHQG…VDYG). Residues 317–357 (PATRASSSGTLPEVDPLVPPGRGRSQESMQSHSQEPVSVPQ) form a disordered region. Residues 342-357 (QESMQSHSQEPVSVPQ) are compositionally biased toward polar residues. A coiled-coil region spans residues 369-397 (QLDVLTQTVSILEQRLTLTEDKLKQCLEN).

This sequence belongs to the WD repeat POC1 family. Interacts with POC1B.

It localises to the cytoplasm. The protein localises to the cytoskeleton. It is found in the microtubule organizing center. The protein resides in the centrosome. Its subcellular location is the centriole. It localises to the cilium basal body. The protein localises to the spindle pole. In terms of biological role, plays an important role in centriole assembly and/or stability and ciliogenesis. Involved in early steps of centriole duplication, as well as in the later steps of centriole length control. Acts in concert with POC1B to ensure centriole integrity and proper mitotic spindle formation. This Bos taurus (Bovine) protein is POC1 centriolar protein homolog A (POC1A).